A 486-amino-acid polypeptide reads, in one-letter code: Vacuolar-processing enzyme beta-isozyme (486 aa).

An N-terminal signal peptide occupies residues 1 to 21; it reads MAKSCYFRPALLLLLVLLVHA. His-169 is a catalytic residue. The Nucleophile role is filled by Cys-211. A disulfide bridge connects residues Cys-244 and Cys-258. Asn-309 carries N-linked (GlcNAc...) asparagine glycosylation. Disulfide bonds link Cys-420–Cys-450 and Cys-432–Cys-467.

Belongs to the peptidase C13 family. In terms of processing, auto-catalytic activation. As to expression, seed specific. Also expressed in the flowers and buds.

Its subcellular location is the vacuole. It localises to the protein storage vacuole. It carries out the reaction Hydrolysis of proteins and small molecule substrates at -Asn-|-Xaa- bonds.. Asparagine-specific endopeptidase involved in the processing of vacuolar seed protein precursors into the mature forms. Probably involved in post-translational proteolysis of seed storage proteins in the protein storage vacuole of developing seeds. The polypeptide is Vacuolar-processing enzyme beta-isozyme (Arabidopsis thaliana (Mouse-ear cress)).